The sequence spans 350 residues: Thymidine kinase (350 aa).

Residue 15-22 participates in ATP binding; sequence GAHGLGKT. Glutamate 44 (proton acceptor) is an active-site residue. Residue glutamine 88 coordinates substrate. Arginine 178 provides a ligand contact to ATP. Arginine 184 lines the substrate pocket.

The protein belongs to the herpesviridae thymidine kinase family. Homodimer.

The enzyme catalyses thymidine + ATP = dTMP + ADP + H(+). In terms of biological role, catalyzes the transfer of the gamma-phospho group of ATP to thymidine to generate dTMP in the salvage pathway of pyrimidine synthesis. The dTMP serves as a substrate for DNA polymerase during viral DNA replication. Allows the virus to be reactivated and to grow in non-proliferative cells lacking a high concentration of phosphorylated nucleic acid precursors. The protein is Thymidine kinase of Bos taurus (Bovine).